Here is a 216-residue protein sequence, read N- to C-terminus: Soluble inorganic pyrophosphatase 4 (216 aa).

Ser-18 is subject to Phosphoserine. Residues Lys-66 and Arg-80 each coordinate substrate. The active-site Proton donor is Tyr-88. Tyr-92 contributes to the substrate binding site. Asp-102, Asp-107, and Asp-139 together coordinate Mg(2+). Tyr-176 is a binding site for substrate.

This sequence belongs to the PPase family. As to quaternary structure, monomer. It depends on Mg(2+) as a cofactor. In terms of tissue distribution, ubiquitous, excepted in pollen. Very low expression in cork, xylem and hypocotyls.

The protein localises to the cytoplasm. The enzyme catalyses diphosphate + H2O = 2 phosphate + H(+). Its activity is regulated as follows. Inhibited by Zn(2+), Ca(2+), Ba(2+), Fe(2+), Co(2+), Cu(2+), Eu(2+), Eu(3+) and Mn(2+). Catalyzes the irreversible hydrolysis of pyrophosphate (PPi) to phosphate. The MgPPi(2-) complex binds to the enzyme only after a free Mg(2+) ion has bound. No activity with glycerol-3-phosphate, glucose-6-phosphate, p-nitrophenylphosphate, ADP, NADP(+), NAD(+),NADH, NADPH or phosphoribosyl pyrophosphate as substrates. The protein is Soluble inorganic pyrophosphatase 4 of Arabidopsis thaliana (Mouse-ear cress).